A 78-amino-acid polypeptide reads, in one-letter code: ATP synthase subunit a (78 aa).

The chain crosses the membrane as a helical span at residues leucine 34–leucine 54.

This sequence belongs to the ATPase A chain family. F-type ATPases have 2 components, CF(1) - the catalytic core - and CF(0) - the membrane proton channel. CF(1) has five subunits: alpha(3), beta(3), gamma(1), delta(1), epsilon(1). CF(0) has three main subunits: a, b and c.

Its subcellular location is the mitochondrion inner membrane. Mitochondrial membrane ATP synthase (F(1)F(0) ATP synthase or Complex V) produces ATP from ADP in the presence of a proton gradient across the membrane which is generated by electron transport complexes of the respiratory chain. F-type ATPases consist of two structural domains, F(1) - containing the extramembraneous catalytic core and F(0) - containing the membrane proton channel, linked together by a central stalk and a peripheral stalk. During catalysis, ATP synthesis in the catalytic domain of F(1) is coupled via a rotary mechanism of the central stalk subunits to proton translocation. Key component of the proton channel; it may play a direct role in the translocation of protons across the membrane. This chain is ATP synthase subunit a (atp6), found in Aspergillus amstelodami.